The following is a 69-amino-acid chain: Conotoxin Lt5.10 (69 aa).

Positions 1–19 (MLCLPVFIILLLLASPAAP) are cleaved as a signal peptide. A propeptide spanning residues 20-54 (KSLETRIQNDLIRAGLTDADLKTEKGFLSGLLNVA) is cleaved from the precursor.

This sequence belongs to the conotoxin T superfamily. Post-translationally, contains 2 disulfide bonds that can be either 'C1-C3, C2-C4' or 'C1-C4, C2-C3', since these disulfide connectivities have been observed for conotoxins with cysteine framework V (for examples, see AC P0DQQ7 and AC P81755). Expressed by the venom duct.

The protein resides in the secreted. This Conus litteratus (Lettered cone) protein is Conotoxin Lt5.10.